Consider the following 1896-residue polypeptide: MRELEAKATKDVERNLSRDLVQEEEQLMEEKKKKKDDKKKKEAAQKKATEQKIKVPEQIKPSVSQPQPANSDNGTSTATSTNNNAKRATASNQQPPPPQQQQPQQEQQQQQPQALPRYPREVPPRFRHQEHKQLLKRGQHFPVIAANLGSAVKVLNSQSESSAVTNQQPQNNGEVQNSKSQSDINHNTSGSHYENCQRGPVSSTSDCSTSCKNAVNDLLEKEAWPSAPGSDPELAPECIDADSASNSESERNITVMASGNTGGEKDGLRNSTGLGSQSKFVVGSSSNNVGHGSSTGPWGFPHGALISTCQVSVDAPESKPESSNNRMNAWGTVSSSSNGGLNPSTLNSASNHGAWPVLENNGLALKGPVGSGSSGINIQCSTIGQMPNNQNINSKVSGSSTHGTWGSLQETCEPEVSGTQKVSFSGQPQNITTETTGPNNTTNFMTSSLPNSGSVQNNELPTSNPGAWRVSTMNHPQIQAPSVMNGTSLSHLSNGESKTGGSYGTTWGAYGSNYSGDKCAGPNGQANGDTVNATLMQPGINGPMGTNFQVNTNKGGGVWEPGTVNSQSSPWGSGNGANSGGSRRGWGSPAQNTGTGLSSVEWNKLPSNQHSNDSANGNGKKLTNGWKSTEEDDQGSATSQTNEQNSVWAKAGGTVESDGSAESTGRLEEKVTGESQSRDRRKIDQHTLLQSIVNRTDLDPRVLSNSGWGQTPIKQNTAWDTETSPRGERKTDNGTEAWGSSATQTFNSGACTDKTSPNSNDTSSVSGWGDPKPTLRWGDSKGSNCQGGWEDDSAATGMIKSNQWGGCKEDKSTWNDSQKSKQGWGDGQKSSQGWSISAGDNWGESSRSNHWGEANKKSSSGGSDSDRSISGWNELGKTSSFTWGNNINPNNSSGWDESSKPNSSQGWGDPPKCNQSLGWGDSSKPVSSPDWNKQQDIVGSWGIPPATSKPPGTGWLGGPIPAPAKEEEPTGWEEPSPESIRRKMEIDDGTSAWGDPSKYNYKNVNMWNKNIPEASGRSDQQAQMHRLLPAASAVSSKETSSGSGWGEPWAEPSTPATTVDNGTSAWGKPIDSGPSWGEPITAASNASTWGSSSVGPQSLSKSGPKSMQDGWCGDDMPLPGSRPTGWEEEEDVEIGMWNSNSSQELNSSLNWPPYTKKMSSKGLSGKKRRRERGMMKGGNKQEDAWINPFVKQFSNISFSRDSPEENVQSNKMDLSGGMLQDKRMEIDKHSLNIGDYNRTVGKGPGSRPQISKESSMERNPYFDKNGNPNMFGVGNTAAQPRGMQQPPAQPLSSSQPNLRAQVPPPLLSPQVPVSLLKYAPNNGGLNPLFGPQQVAMLNQLSQLNQLSQISQLQRLLAQQQRAQSQRSAPSANRQQQDQQGRPLSVQQQMMQQSRQLDPSLLVKQQTPPSQQPLHQPAMKSFLDNVMPHTTPELQKGPSPVNAFSNFPIGLNSNLNVNMDMNSIKEPQSRLRKWTTVDSMSVNTSLDQNSSKHGAISSGFRLEESPFVPYDFMNSSTSPASPPGSIGDGWPRAKSPNGSSSVNWPPEFRPGEPWKGYPNIDPETDPYVTPGSVINSLSINTVREVDHLRDRNSGSSSSLNTTLPSTSAWSSIRASNYNVPLSSTAQSTSARNSDSKLTWSPGSVTNTSLAHELWKVPLPPKNITAPSRPPPGLTGQKPPLSTWDNSPLRVGGGWGNSDARYTPGSSWGESSSGRITNWLVLKNLTPQIDGSTLRTLCMQHGPLITFHLNLPHGNALVRYSSKEEVVKAQKSLHMCVLGNTTILAEFASEEEISRFFAQSQSLTPSPGWQSLGSSQSRLGSLDCSHSFSSRTDVNHWNGAGLSGANCGDLHGTSLWGTPHYSTSLWGPPSSDPRGISSPSPINAFLSVDHLGGGGESM.

Basic and acidic residues-rich tracts occupy residues 1–21 (MREL…RDLV) and 39–57 (KKKE…KVPE). 4 disordered regions span residues 1–137 (MREL…LLKR), 159–209 (SESS…DCST), 222–250 (EAWP…SESE), and 257–276 (ASGN…GLGS). The tract at residues 1-917 (MRELEAKATK…GDPPKCNQSL (917 aa)) is interaction with argonaute family proteins. 2 stretches are compositionally biased toward low complexity: residues 69 to 93 (ANSD…ASNQ) and 101 to 113 (QQPQ…QQPQ). Positions 125 to 137 (RFRHQEHKQLLKR) are enriched in basic residues. Residues 239–488 (IDADSASNSE…QAPSVMNGTS (250 aa)) form a sufficient for interaction with AGO1, AGO3 and AGO4 region. 5 sufficient for interaction with AGO2 regions span residues 255–331 (VMAS…NAWG), 303–384 (GALI…STIG), 325–424 (NRMN…KVSF), 394–480 (SKVS…QIQA), and 487–736 (TSLS…NGTE). Polar residues-rich tracts occupy residues 396-410 (VSGS…SLQE) and 417-429 (SGTQ…GQPQ). Disordered stretches follow at residues 396 to 461 (VSGS…NELP), 548 to 683 (FQVN…RRKI), 703 to 998 (LSNS…DPSK), 1011 to 1126 (IPEA…PTGW), and 1143 to 1182 (QELN…NKQE). Positions 430 to 443 (NITTETTGPNNTTN) are enriched in low complexity. Polar residues predominate over residues 444-461 (FMTSSLPNSGSVQNNELP). The interval 551 to 1279 (NTNKGGGVWE…MFGVGNTAAQ (729 aa)) is sufficient for interaction with AGO1 and AGO4. The segment covering 573–584 (SGNGANSGGSRR) has biased composition (gly residues). Composition is skewed to polar residues over residues 591–617 (QNTG…SANG) and 635–647 (GSAT…QNSV). The segment covering 665–683 (GRLEEKVTGESQSRDRRKI) has biased composition (basic and acidic residues). Residues 703–722 (LSNSGWGQTPIKQNTAWDTE) show a composition bias toward polar residues. Over residues 723 to 733 (TSPRGERKTDN) the composition is skewed to basic and acidic residues. S724 is subject to Phosphoserine. The segment covering 738–766 (WGSSATQTFNSGACTDKTSPNSNDTSSVS) has biased composition (polar residues). Low complexity predominate over residues 858–871 (SSSGGSDSDRSISG). S863 carries the phosphoserine modification. 2 stretches are compositionally biased toward polar residues: residues 876-906 (GKTS…SSQG) and 924-937 (KPVS…QQDI). S976 carries the phosphoserine modification. Polar residues-rich tracts occupy residues 1033–1042 (AVSSKETSSG), 1054–1064 (TPATTVDNGTS), and 1082–1105 (AASN…SGPK). The segment at 1059–1129 (VDNGTSAWGK…GSRPTGWEEE (71 aa)) is sufficient for interaction with AGO2. The segment covering 1143 to 1163 (QELNSSLNWPPYTKKMSSKGL) has biased composition (low complexity). S1197 and S1255 each carry phosphoserine. Disordered regions lie at residues 1234–1256 (GDYN…ESSM), 1273–1306 (VGNT…PPPL), and 1360–1395 (QRAQ…QSRQ). Composition is skewed to low complexity over residues 1284-1296 (QQPP…SSQP) and 1360-1376 (QRAQ…RQQQ). At T1406 the chain carries Phosphothreonine. Disordered regions lie at residues 1512–1570 (MNSS…VTPG) and 1659–1685 (PKNI…WDNS). S1520 is modified (phosphoserine). The segment at 1605 to 1896 (TSAWSSIRAS…DHLGGGGESM (292 aa)) is sufficient for interaction with AGO2. In terms of domain architecture, RRM spans 1716–1788 (NWLVLKNLTP…TTILAEFASE (73 aa)). 2 positions are modified to phosphoserine: S1804 and S1825.

This sequence belongs to the GW182 family. As to quaternary structure, interacts with AGO2. Interacts with AGO1, AGO3 and AGO4. Interacts with CNOT1; the interaction is direct and mediates the association with the CCR4-NOT complex. Interacts with ZC3H12A. Interacts with SND1. Interacts with GARRE1.

The protein resides in the cytoplasm. The protein localises to the P-body. In terms of biological role, plays a role in RNA-mediated gene silencing by both micro-RNAs (miRNAs) and short interfering RNAs (siRNAs). Required for miRNA-dependent repression of translation and for siRNA-dependent endonucleolytic cleavage of complementary mRNAs by argonaute family proteins. As a scaffolding protein, associates with argonaute proteins bound to partially complementary mRNAs, and can simultaneously recruit CCR4-NOT and PAN deadenylase complexes. The chain is Trinucleotide repeat-containing gene 6A protein (Tnrc6a) from Mus musculus (Mouse).